A 64-amino-acid chain; its full sequence is MDAARAQQIIESDQVIEVLHEGSPVWIEKVMDNNMAHVSYIHTKEEKDVPLYMLVEKELPKNFH.

Belongs to the SspH family.

Its subcellular location is the spore core. The sequence is that of Small, acid-soluble spore protein H from Acetivibrio thermocellus (strain ATCC 27405 / DSM 1237 / JCM 9322 / NBRC 103400 / NCIMB 10682 / NRRL B-4536 / VPI 7372) (Clostridium thermocellum).